Here is a 148-residue protein sequence, read N- to C-terminus: Cofilin/actin-depolymerizing factor homolog (148 aa).

The 140-residue stretch at 4 to 143 (GVTVSDVCKT…SREAVEEKLR (140 aa)) folds into the ADF-H domain. The Nuclear localization signal signature appears at 19 to 23 (KKDKK).

It belongs to the actin-binding proteins ADF family. Post-translationally, phosphorylated in vitro by protein kinase LIMK1. Phosphorylation is required for inactivation of tsr and for cell proliferation and axon growth. Phosphorylation is negatively regulated by the panthothenate kinase fbl which catalyzes the first step in the conversion of panthothenic acid to coenzyme A. In terms of processing, dephosphorylated by protein phosphatase ssh which activates tsr.

It localises to the cytoplasm. The protein localises to the cytoskeleton. Its subcellular location is the nucleus matrix. Functionally, exhibits F-actin depolymerizing activity and regulates actin cytoskeleton dynamics. Required for cytokinesis in both mitotic and meiotic cells and for aster migration and separation. Promotes cell motility during ovary development and oogenesis. During larval development, required for the cell rearrangement needed for formation of terminal filaments which are stacks of somatic cells that are important for the initiation of ovarioles. Also required for border cell migration during oogenesis. During border cell migration, required for actin turnover and lamellipodial protrusion. Required for the establishment of planar cell polarity (PCP) where cells adopt a uniform orientation within the plane of an epithelium. During establishment of PCP, required for the redistribution of the PCP core proteins fz and stan/fmi to the proximodistal cell boundary. During pupal development, required for elongation of the retinal cell body and for rhabdomere morphogenesis. Required for mushroom body neuroblast proliferation and axon growth. Plays a role in the positive regulation of protein secretion. Plays a role in the regulation of nuclear localization of actin. Required for the maintenance of epithelial integrity by controlling cell junctions and is also necessary for cell survival and tissue growth through regulation of JNK and yki signaling. The chain is Cofilin/actin-depolymerizing factor homolog from Drosophila melanogaster (Fruit fly).